The chain runs to 337 residues: RNA 3'-terminal phosphate cyclase (337 aa).

Residues Gln-101 and 282–285 (HMSD) contribute to the ATP site. His-306 serves as the catalytic Tele-AMP-histidine intermediate.

Belongs to the RNA 3'-terminal cyclase family. Type 1 subfamily.

It is found in the cytoplasm. It carries out the reaction a 3'-end 3'-phospho-ribonucleotide-RNA + ATP = a 3'-end 2',3'-cyclophospho-ribonucleotide-RNA + AMP + diphosphate. Its function is as follows. Catalyzes the conversion of 3'-phosphate to a 2',3'-cyclic phosphodiester at the end of RNA. The mechanism of action of the enzyme occurs in 3 steps: (A) adenylation of the enzyme by ATP; (B) transfer of adenylate to an RNA-N3'P to produce RNA-N3'PP5'A; (C) and attack of the adjacent 2'-hydroxyl on the 3'-phosphorus in the diester linkage to produce the cyclic end product. The biological role of this enzyme is unknown but it is likely to function in some aspects of cellular RNA processing. This Saccharolobus solfataricus (strain ATCC 35092 / DSM 1617 / JCM 11322 / P2) (Sulfolobus solfataricus) protein is RNA 3'-terminal phosphate cyclase (rtcA).